Reading from the N-terminus, the 340-residue chain is Cytosolic Fe-S cluster assembly factor NBP35 (340 aa).

The segment at 1–41 (MPSLVDPVANKTDEGNNRTDLKAPEPEHCPGTESEEAGKAD) is disordered. The span at 11–30 (KTDEGNNRTDLKAPEPEHCP) shows a compositional bias: basic and acidic residues. [4Fe-4S] cluster is bound by residues Cys-29, Cys-43, Cys-46, and Cys-52. Position 82–89 (82–89 (GKGGVGKS)) interacts with ATP. The [4Fe-4S] cluster site is built by Cys-255 and Cys-258.

The protein belongs to the Mrp/NBP35 ATP-binding proteins family. NUBP1/NBP35 subfamily. As to quaternary structure, heterotetramer of 2 NBP35 and 2 CFD1 chains. The cofactor is [4Fe-4S] cluster.

The protein resides in the cytoplasm. It is found in the nucleus. Functionally, component of the cytosolic iron-sulfur (Fe/S) protein assembly (CIA) machinery. Required for maturation of extramitochondrial Fe-S proteins. The NBP35-CFD1 heterotetramer forms a Fe-S scaffold complex, mediating the de novo assembly of an Fe-S cluster and its transfer to target apoproteins. Required for biogenesis and export of both ribosomal subunits, which may reflect a role in assembly of the Fe/S clusters in RLI1, a protein which performs rRNA processing and ribosome export. This Yarrowia lipolytica (strain CLIB 122 / E 150) (Yeast) protein is Cytosolic Fe-S cluster assembly factor NBP35.